Reading from the N-terminus, the 246-residue chain is Putative S-adenosyl-L-methionine-dependent methyltransferase Mflv_0168 (246 aa).

S-adenosyl-L-methionine-binding positions include aspartate 112 and 141 to 142 (DL).

Belongs to the UPF0677 family.

Functionally, exhibits S-adenosyl-L-methionine-dependent methyltransferase activity. This is Putative S-adenosyl-L-methionine-dependent methyltransferase Mflv_0168 from Mycolicibacterium gilvum (strain PYR-GCK) (Mycobacterium gilvum (strain PYR-GCK)).